The sequence spans 1236 residues: Complement factor H (1236 aa).

The signal sequence occupies residues Met1–Ala18. Sushi domains lie at Glu19 to Lys82, Lys83 to Val143, Val144 to Glu207, Ile208 to Glu264, Ile265 to Trp322, Cys325 to Cys383, Arg385 to Arg442, Lys444 to Lys505, Cys507 to Cys562, Arg565 to Val623, Lys627 to Glu685, Arg688 to Ala745, Arg750 to Glu804, Gln809 to Glu866, Ile868 to Gly936, Leu937 to Ser994, Thr995 to Asp1053, Val1054 to Asp1111, Gly1114 to Glu1172, and Ala1173 to Cys1235. 40 disulfide bridges follow: Cys21–Cys66, Cys52–Cys80, Cys85–Cys129, Cys114–Cys141, Cys146–Cys192, Cys178–Cys205, Cys210–Cys251, Cys237–Cys262, Cys267–Cys309, Cys294–Cys320, Cys325–Cys372, Cys355–Cys383, Cys387–Cys429, Cys414–Cys440, Cys446–Cys492, Cys475–Cys503, Cys507–Cys551, Cys534–Cys562, Cys567–Cys609, Cys595–Cys621, Cys629–Cys672, Cys658–Cys683, Cys690–Cys732, Cys718–Cys743, Cys752–Cys791, Cys780–Cys802, Cys811–Cys853, Cys839–Cys864, Cys870–Cys923, Cys909–Cys934, Cys939–Cys981, Cys967–Cys992, Cys997–Cys1040, Cys1026–Cys1051, Cys1056–Cys1098, Cys1084–Cys1109, Cys1116–Cys1159, Cys1145–Cys1170, Cys1174–Cys1225, and Cys1208–Cys1235. Residues Tyr168 and Tyr170 each carry the sulfotyrosine modification. Sulfotyrosine occurs at positions 465 and 473. Sulfotyrosine is present on residues Tyr575, Tyr579, and Tyr585. N-linked (GlcNAc...) asparagine glycosylation occurs at Asn775. A glycan (N-linked (GlcNAc...) asparagine) is linked at Asn1100.

As to quaternary structure, homodimer. Also forms homooligomers. Interacts with complement protein C3b; this interaction inhibits complement activation. Interacts with complement protein C3d. Interacts with CR3/ITGAM; this interaction mediates adhesion of neutrophils to pathogens leading to pathogen clearance. Post-translationally, sulfated on tyrosine residues. As to expression, CFH is one of the most abundant complement components in blood where the liver is the major source of CFH protein in vivo. in addition, CFH is secreted by additional cell types including monocytes, fibroblasts, or endothelial cells.

Its subcellular location is the secreted. Its function is as follows. Glycoprotein that plays an essential role in maintaining a well-balanced immune response by modulating complement activation. Acts as a soluble inhibitor of complement, where its binding to self markers such as glycan structures prevents complement activation and amplification on cell surfaces. Accelerates the decay of the complement alternative pathway (AP) C3 convertase C3bBb, thus preventing local formation of more C3b, the central player of the complement amplification loop. As a cofactor of the serine protease factor I, CFH also regulates proteolytic degradation of already-deposited C3b. In addition, mediates several cellular responses through interaction with specific receptors. For example, interacts with CR3/ITGAM receptor and thereby mediates the adhesion of human neutrophils to different pathogens. In turn, these pathogens are phagocytosed and destroyed. The chain is Complement factor H (CFH) from Bos taurus (Bovine).